Here is a 190-residue protein sequence, read N- to C-terminus: Vespryn-21 (190 aa).

A signal peptide spans 1–20 (MLLFTLCFFADLENGGKALA). The B30.2/SPRY domain maps to 21–127 (SPPGKWQKAD…LIWQRGLWFL (107 aa)). Positions 128-190 (QRLETDSDKL…LGGGVSLTNL (63 aa)) are excised as a propeptide.

It belongs to the ohanin/vespryn family. As to expression, expressed by the venom gland.

It localises to the secreted. Neurotoxin that produces dose-dependent hypolocomotion and hyperalgesia in mice. May directly act on the central nervous system, as it is 6500-fold more potent when administered intracerebroventricularly than intraperitoneal. This Drysdalia coronoides (White-lipped snake) protein is Vespryn-21.